Reading from the N-terminus, the 317-residue chain is Transcriptional regulator LsrR (317 aa).

Residues 33 to 56 (QSEISDRLGLTRLKVSRLLEKGHQ) constitute a DNA-binding region (H-T-H motif).

It belongs to the SorC transcriptional regulatory family.

Its subcellular location is the cytoplasm. With respect to regulation, inactivated by phosphorylated autoinducer-2 (phospho-AI-2). Phospho-AI-2 acts by binding to LsrR, which is then unable to bind to the promoter regions, allowing the transcription of the target genes. In terms of biological role, transcriptional regulator that represses the expression of the lsr operon in the absence of the quorum-sensing signaling molecule autoinducer 2 (AI-2). It also represses the expression of the lsrRK operon. Acts by binding directly to the lsrA and lsrR promoter regions. In the presence of phosphorylated autoinducer-2 (phospho-AI-2), LsrR is inactivated, leading to the transcription of the genes. This Escherichia coli (strain K12 / DH10B) protein is Transcriptional regulator LsrR (lsrR).